The sequence spans 540 residues: Signal peptide peptidase-like 2 (540 aa).

A signal peptide spans 1-27; that stretch reads MDSLRFLRILLLSSSILLLSLRSTVTA. Residues 28–196 are Lumenal-facing; sequence GDIVHQDNLA…PRRPAVDVAE (169 aa). Residue asparagine 83 is glycosylated (N-linked (GlcNAc...) asparagine). Residues 95–173 enclose the PA domain; that stretch reads SCTPLKNKLS…QDAGASLQKM (79 aa). Asparagine 176 carries N-linked (GlcNAc...) asparagine glycosylation. The chain crosses the membrane as a helical span at residues 197-217; it reads VFLWLMAIGTILCASYWSAWS. Residues 218–248 lie on the Cytoplasmic side of the membrane; the sequence is AREAAIEHDKLLKDAIDEIPNTNDGGSGVVE. The helical transmembrane segment at 249 to 269 threads the bilayer; the sequence is INSISAIFFVVLASGFLVILY. At 270–278 the chain is on the lumenal side; sequence KLMSYWFVE. Residues 279 to 299 form a helical membrane-spanning segment; the sequence is LLVVVFCIGGVEGLQTCLVAL. Residues 300-319 lie on the Cytoplasmic side of the membrane; that stretch reads LSRWFQRAADTYVKVPFLGP. The chain crosses the membrane as a helical span at residues 320–340; that stretch reads ISYLTLAVSPFCIVFAVLWAV. Residues 341 to 345 are Lumenal-facing; the sequence is YRVHS. The chain crosses the membrane as a helical span at residues 346–366; it reads FAWIGQDVLGIALIITVLQIV. The Cytoplasmic portion of the chain corresponds to 367–370; the sequence is HVPN. The chain crosses the membrane as a helical span at residues 371-391; sequence LKVGTVLLSCAFLYDIFWVFV. Aspartate 385 is a catalytic residue. At 392 to 429 the chain is on the lumenal side; sequence SKKLFHESVMIVVARGDKSGEDGIPMLLKIPRMFDPWG. A helical transmembrane segment spans residues 430-450; the sequence is GYSIIGFGDILLPGLLIAFAL. The active site involves aspartate 438. Topologically, residues 451–462 are cytoplasmic; that stretch reads RYDWLANKTLRT. Residues 463–483 traverse the membrane as a helical segment; sequence GYFIWAMVAYGLGLLITYVAL. The Lumenal portion of the chain corresponds to 484-488; the sequence is NLMDG. Residues 489–509 form a helical membrane-spanning segment; it reads HGQPALLYIVPFTLGTMLTLA. The short motif at 492–494 is the PAL element; that stretch reads PAL. The Cytoplasmic segment spans residues 510–540; that stretch reads RKRDDLWILWTKGEPERACPHHVRLEQCSEK.

The protein belongs to the peptidase A22B family. In terms of processing, glycosylated. In terms of tissue distribution, ubiquitous.

Its subcellular location is the endosome membrane. Its function is as follows. Intramembrane-cleaving aspartic protease (I-CLiP) that cleaves type II membrane signal peptides in the hydrophobic plane of the membrane. The protein is Signal peptide peptidase-like 2 (SPPL2) of Arabidopsis thaliana (Mouse-ear cress).